A 217-amino-acid chain; its full sequence is NADPH-dependent 3-demethoxyubiquinone 3-hydroxylase, mitochondrial (217 aa).

2 consecutive repeat copies span residues 49–130 (IIER…SALM) and 131–217 (GKEA…STRV). Residues 49 to 217 (IIERIIRVDH…KTAIWLSTRV (169 aa)) form a 2 X approximate tandem repeats region. Arg-52 is an NADH binding site. Fe cation contacts are provided by Glu-61, Glu-91, His-94, Glu-143, Glu-178, and His-181. Arg-216 is an NADH binding site.

Belongs to the COQ7 family. As to quaternary structure, component of a multi-subunit COQ enzyme complex. It depends on Fe cation as a cofactor.

It is found in the mitochondrion inner membrane. It catalyses the reaction a 5-methoxy-2-methyl-3-(all-trans-polyprenyl)benzoquinone + NADH + O2 = a 3-demethylubiquinone + NAD(+) + H2O. The protein operates within cofactor biosynthesis; ubiquinone biosynthesis. Its function is as follows. Catalyzes the hydroxylation of the 5-methoxy-2-methyl-3-(all-trans-polyprenyl)benzoquinone at the C6 position and participates in the biosynthesis of ubiquinone. Catalyzes the reaction through a substrate-mediated reduction pathway, whereby NADH shuttles electrons to 5-methoxy-2-methyl-3-(all-trans-decaprenyl)benzoquinone, which then transfers the electrons to the two Fe(3+) centers. The binding of 5-methoxy-2-methyl-3-(all-trans-polyprenyl)benzoquinone (DMQn) mediates reduction of the diiron center by nicotinamide adenine dinucleotide (NADH) and initiates oxygen activation for subsequent DMQ hydroxylation. Also has a structural role in the COQ enzyme complex, stabilizing other COQ polypeptides. This is NADPH-dependent 3-demethoxyubiquinone 3-hydroxylase, mitochondrial from Dictyostelium discoideum (Social amoeba).